The primary structure comprises 78 residues: Acyl carrier protein (78 aa).

A Carrier domain is found at 2 to 77; sequence SEIASRVKAI…DAVAYIEEHA (76 aa). Serine 37 is subject to O-(pantetheine 4'-phosphoryl)serine.

This sequence belongs to the acyl carrier protein (ACP) family. 4'-phosphopantetheine is transferred from CoA to a specific serine of apo-ACP by AcpS. This modification is essential for activity because fatty acids are bound in thioester linkage to the sulfhydryl of the prosthetic group.

It localises to the cytoplasm. It participates in lipid metabolism; fatty acid biosynthesis. In terms of biological role, carrier of the growing fatty acid chain in fatty acid biosynthesis. The sequence is that of Acyl carrier protein from Bacteroides fragilis (strain ATCC 25285 / DSM 2151 / CCUG 4856 / JCM 11019 / LMG 10263 / NCTC 9343 / Onslow / VPI 2553 / EN-2).